Consider the following 897-residue polypeptide: 3'-5' exonuclease DinG (897 aa).

The Exonuclease domain maps to 8–161 (VVDLETTGNQ…DEDAATTAKL (154 aa)). Residues 241 to 496 (SKAVDQLGLT…KAIDQLEKQR (256 aa)) enclose the Helicase ATP-binding domain. Residue 276-283 (ASLGSGKS) participates in ATP binding. The short motif at 448–451 (DEAH) is the DEAH box element. Residues 703–893 (NIDEYVASIV…QFGKLLRQIQ (191 aa)) enclose the Helicase C-terminal domain.

This sequence belongs to the helicase family. DinG subfamily. Type 2 sub-subfamily.

In terms of biological role, 3'-5' exonuclease. This is 3'-5' exonuclease DinG from Staphylococcus aureus (strain USA300).